A 165-amino-acid polypeptide reads, in one-letter code: Large ribosomal subunit protein uL10 (165 aa).

Belongs to the universal ribosomal protein uL10 family. In terms of assembly, part of the ribosomal stalk of the 50S ribosomal subunit. The N-terminus interacts with L11 and the large rRNA to form the base of the stalk. The C-terminus forms an elongated spine to which L12 dimers bind in a sequential fashion forming a multimeric L10(L12)X complex.

Its function is as follows. Forms part of the ribosomal stalk, playing a central role in the interaction of the ribosome with GTP-bound translation factors. The protein is Large ribosomal subunit protein uL10 of Serratia proteamaculans (strain 568).